The sequence spans 1082 residues: Carbamoyl phosphate synthase large chain (1082 aa).

The tract at residues 1-401 (MPKDKALKKV…ALLKAVRSLE (401 aa)) is carboxyphosphate synthetic domain. 12 residues coordinate ATP: Arg129, Arg169, Gly175, Gly176, Lys208, Val210, Glu215, Gly241, Ile242, His243, Gln284, and Glu298. In terms of domain architecture, ATP-grasp 1 spans 133–327 (KNMCLEIGEP…IAKVATKVAV (195 aa)). Residues Gln284, Glu298, and Asn300 each coordinate Mg(2+). Positions 284, 298, and 300 each coordinate Mn(2+). The segment at 402 to 561 (TGVTGMNLPE…YSTYEDEDEA (160 aa)) is oligomerization domain. The carbamoyl phosphate synthetic domain stretch occupies residues 562–944 (EPQAVRKVVV…ALYKACLSAG (383 aa)). In terms of domain architecture, ATP-grasp 2 spans 686–876 (DQLVAELGIP…MVNLATRICL (191 aa)). Arg722, Lys761, Leu763, Glu767, Gly792, Ile793, His794, Ser795, Gln835, and Glu847 together coordinate ATP. 3 residues coordinate Mg(2+): Gln835, Glu847, and Asn849. The Mn(2+) site is built by Gln835, Glu847, and Asn849. An MGS-like domain is found at 945-1082 (YTLPSSGKAV…PLIPLQEYVS (138 aa)). Positions 945–1082 (YTLPSSGKAV…PLIPLQEYVS (138 aa)) are allosteric domain.

The protein belongs to the CarB family. As to quaternary structure, composed of two chains; the small (or glutamine) chain promotes the hydrolysis of glutamine to ammonia, which is used by the large (or ammonia) chain to synthesize carbamoyl phosphate. Tetramer of heterodimers (alpha,beta)4. Mg(2+) serves as cofactor. The cofactor is Mn(2+).

It catalyses the reaction hydrogencarbonate + L-glutamine + 2 ATP + H2O = carbamoyl phosphate + L-glutamate + 2 ADP + phosphate + 2 H(+). It carries out the reaction hydrogencarbonate + NH4(+) + 2 ATP = carbamoyl phosphate + 2 ADP + phosphate + 2 H(+). It functions in the pathway amino-acid biosynthesis; L-arginine biosynthesis; carbamoyl phosphate from bicarbonate: step 1/1. Its pathway is pyrimidine metabolism; UMP biosynthesis via de novo pathway; (S)-dihydroorotate from bicarbonate: step 1/3. Large subunit of the glutamine-dependent carbamoyl phosphate synthetase (CPSase). CPSase catalyzes the formation of carbamoyl phosphate from the ammonia moiety of glutamine, carbonate, and phosphate donated by ATP, constituting the first step of 2 biosynthetic pathways, one leading to arginine and/or urea and the other to pyrimidine nucleotides. The large subunit (synthetase) binds the substrates ammonia (free or transferred from glutamine from the small subunit), hydrogencarbonate and ATP and carries out an ATP-coupled ligase reaction, activating hydrogencarbonate by forming carboxy phosphate which reacts with ammonia to form carbamoyl phosphate. In Desulforudis audaxviator (strain MP104C), this protein is Carbamoyl phosphate synthase large chain.